We begin with the raw amino-acid sequence, 641 residues long: Chaperone protein DnaK (641 aa).

Thr-200 bears the Phosphothreonine; by autocatalysis mark. Positions 606–623 (AEQGGNADAASGNAQASK) are enriched in low complexity. Residues 606-627 (AEQGGNADAASGNAQASKAADD) form a disordered region.

It belongs to the heat shock protein 70 family.

Functionally, acts as a chaperone. In Xanthomonas euvesicatoria pv. vesicatoria (strain 85-10) (Xanthomonas campestris pv. vesicatoria), this protein is Chaperone protein DnaK.